Reading from the N-terminus, the 86-residue chain is MATKKAGGSSRNGRDSAGRRLGVKKSDGQYVIPGNIIVRQRGTTIHPGTNVGLGKDHTIFALIEGRVEFLTKRNHKIVNVKEITNA.

Residues 1 to 26 (MATKKAGGSSRNGRDSAGRRLGVKKS) are disordered.

This sequence belongs to the bacterial ribosomal protein bL27 family.

The polypeptide is Large ribosomal subunit protein bL27 (Rickettsia akari (strain Hartford)).